The primary structure comprises 280 residues: Probable cell division protein WhiA (280 aa).

The segment at residues 247–279 is a DNA-binding region (H-T-H motif); it reads SLEQIANFFFTKYNIKISRSGIQHFSVNLKKLC.

This sequence belongs to the WhiA family.

Involved in cell division and chromosome segregation. The chain is Probable cell division protein WhiA from Mycoplasma genitalium (strain ATCC 33530 / DSM 19775 / NCTC 10195 / G37) (Mycoplasmoides genitalium).